The following is a 594-amino-acid chain: Alanine--tRNA ligase (594 aa).

Zn(2+) contacts are provided by His456, His460, Cys558, and His562.

This sequence belongs to the class-II aminoacyl-tRNA synthetase family. It depends on Zn(2+) as a cofactor.

It is found in the cytoplasm. The catalysed reaction is tRNA(Ala) + L-alanine + ATP = L-alanyl-tRNA(Ala) + AMP + diphosphate. In terms of biological role, catalyzes the attachment of alanine to tRNA(Ala) in a two-step reaction: alanine is first activated by ATP to form Ala-AMP and then transferred to the acceptor end of tRNA(Ala). Also edits incorrectly charged Ser-tRNA(Ala) and Gly-tRNA(Ala) via its editing domain. The sequence is that of Alanine--tRNA ligase (alaS) from Borreliella afzelii (strain PKo) (Borrelia afzelii).